A 275-amino-acid polypeptide reads, in one-letter code: 5'-nucleotidase SurE (275 aa).

Residues Asp14, Asp15, Ser46, and Asn104 each coordinate a divalent metal cation.

It belongs to the SurE nucleotidase family. A divalent metal cation is required as a cofactor.

It localises to the cytoplasm. It carries out the reaction a ribonucleoside 5'-phosphate + H2O = a ribonucleoside + phosphate. Functionally, nucleotidase that shows phosphatase activity on nucleoside 5'-monophosphates. In Synechocystis sp. (strain ATCC 27184 / PCC 6803 / Kazusa), this protein is 5'-nucleotidase SurE.